We begin with the raw amino-acid sequence, 102 residues long: Large ribosomal subunit protein uL24 (102 aa).

Belongs to the universal ribosomal protein uL24 family. In terms of assembly, part of the 50S ribosomal subunit.

In terms of biological role, one of two assembly initiator proteins, it binds directly to the 5'-end of the 23S rRNA, where it nucleates assembly of the 50S subunit. Its function is as follows. One of the proteins that surrounds the polypeptide exit tunnel on the outside of the subunit. The chain is Large ribosomal subunit protein uL24 from Cupriavidus pinatubonensis (strain JMP 134 / LMG 1197) (Cupriavidus necator (strain JMP 134)).